Consider the following 83-residue polypeptide: Large ribosomal subunit protein bL27 (83 aa).

The segment at 1–25 is disordered; sequence MAHKKGQGASRNGRDSESKRLGLKV.

This sequence belongs to the bacterial ribosomal protein bL27 family.

The protein is Large ribosomal subunit protein bL27 of Chlamydia muridarum (strain MoPn / Nigg).